We begin with the raw amino-acid sequence, 300 residues long: Bifunctional protein FolD 2 (300 aa).

NADP(+)-binding positions include 165–167 (GRS), S190, and I231.

Belongs to the tetrahydrofolate dehydrogenase/cyclohydrolase family. Homodimer.

It catalyses the reaction (6R)-5,10-methylene-5,6,7,8-tetrahydrofolate + NADP(+) = (6R)-5,10-methenyltetrahydrofolate + NADPH. It carries out the reaction (6R)-5,10-methenyltetrahydrofolate + H2O = (6R)-10-formyltetrahydrofolate + H(+). It functions in the pathway one-carbon metabolism; tetrahydrofolate interconversion. In terms of biological role, catalyzes the oxidation of 5,10-methylenetetrahydrofolate to 5,10-methenyltetrahydrofolate and then the hydrolysis of 5,10-methenyltetrahydrofolate to 10-formyltetrahydrofolate. The chain is Bifunctional protein FolD 2 from Pseudomonas syringae pv. syringae (strain B728a).